The chain runs to 681 residues: Peroxisomal acyl-coenzyme A oxidase 2 (681 aa).

Ser-9 is subject to Phosphoserine. Lys-66, Lys-137, Lys-453, Lys-561, and Lys-667 each carry N6-succinyllysine. Positions 679–681 (SNL) match the Microbody targeting signal motif.

This sequence belongs to the acyl-CoA oxidase family. As to quaternary structure, homodimer. Requires FAD as cofactor. Liver and kidney.

It localises to the peroxisome. The catalysed reaction is (25R)-3alpha,7alpha,12alpha-trihydroxy-5beta-cholestan-26-oyl-CoA + A + H2O = (24R,25R)-3alpha,7alpha,12alpha,24-tetrahydroxy-5beta-cholestan-26-oyl-CoA + AH2. The enzyme catalyses (25S)-3alpha,7alpha,12alpha-trihydroxy-5beta-cholestan-26-oyl-CoA + O2 = (24E)-3alpha,7alpha,12alpha-trihydroxy-5beta-cholest-24-en-26-oyl-CoA + H2O2. Its function is as follows. Oxidizes the CoA esters of the bile acid intermediates di- and tri-hydroxycholestanoic acids. Capable of oxidizing short as well as long chain 2-methyl branched fatty acids. In Oryctolagus cuniculus (Rabbit), this protein is Peroxisomal acyl-coenzyme A oxidase 2.